The sequence spans 263 residues: Phosphoinositide-3-kinase-interacting protein 1 (263 aa).

The signal sequence occupies residues 1-18; the sequence is MFGRLYFMLLLSVGLVDC. Topologically, residues 19–163 are extracellular; it reads LSVVKDCITN…SGPKKKKDLG (145 aa). Positions 24–99 constitute a Kringle domain; the sequence is DCITNNGEDY…KKEACDIRIC (76 aa). Disulfide bonds link Cys-25/Cys-99, Cys-46/Cys-80, and Cys-69/Cys-94. Residue Asn-103 is glycosylated (N-linked (GlcNAc...) asparagine). A helical membrane pass occupies residues 164–184; sequence TLGYVLAVFMMAIIILLGGGI. Residues 185-263 lie on the Cytoplasmic side of the membrane; the sequence is TMGYFYKRGR…LMGSAGTPGA (79 aa). The interval 239–263 is disordered; the sequence is NNQTPTQEPVEGADPLMGSAGTPGA.

Its subcellular location is the cell membrane. Negative regulator of hepatic phosphatidylinositol 3-kinase (PI3K) activity. The sequence is that of Phosphoinositide-3-kinase-interacting protein 1 (pik3ip1) from Danio rerio (Zebrafish).